A 406-amino-acid chain; its full sequence is 8-amino-7-oxononanoate synthase (406 aa).

Arg-21 serves as a coordination point for substrate. Gly-112–Tyr-113 is a pyridoxal 5'-phosphate binding site. His-137 is a substrate binding site. Pyridoxal 5'-phosphate-binding residues include Ser-183, His-211, and Thr-239. An N6-(pyridoxal phosphate)lysine modification is found at Lys-242. Residue Thr-358 coordinates substrate.

It belongs to the class-II pyridoxal-phosphate-dependent aminotransferase family. BioF subfamily. In terms of assembly, homodimer. Pyridoxal 5'-phosphate serves as cofactor.

It carries out the reaction 6-carboxyhexanoyl-[ACP] + L-alanine + H(+) = (8S)-8-amino-7-oxononanoate + holo-[ACP] + CO2. Its pathway is cofactor biosynthesis; biotin biosynthesis. Its function is as follows. Catalyzes the decarboxylative condensation of pimeloyl-[acyl-carrier protein] and L-alanine to produce 8-amino-7-oxononanoate (AON), [acyl-carrier protein], and carbon dioxide. The protein is 8-amino-7-oxononanoate synthase of Burkholderia orbicola (strain MC0-3).